Reading from the N-terminus, the 567-residue chain is Diphtheria toxin (567 aa).

Residues 1–32 form the signal peptide; it reads MLVRGYVVSRKLFASILIGALLGIGAPPSAHA. Residues histidine 53 and tyrosine 97 each contribute to the NAD(+) site. Glutamate 180 is a catalytic residue. Disulfide bonds link cysteine 218–cysteine 233 and cysteine 493–cysteine 503.

As to quaternary structure, homodimer. Proteolytic activation by host furin cleaves the protein in two parts, Diphtheria toxin fragment A and Diphtheria toxin fragment B; which remain associated via a disulfide bond.

It carries out the reaction diphthamide-[translation elongation factor 2] + NAD(+) = N-(ADP-D-ribosyl)diphthamide-[translation elongation factor 2] + nicotinamide + H(+). With respect to regulation, partially inhibited by 1,8-naphthalimide (NAP). Diphtheria toxin, produced by a phage infecting Corynebacterium diphtheriae, is a proenzyme that, after activation, catalyzes the covalent attachment of the ADP ribose moiety of NAD to eukaryotic elongation factor 2 (eEF-2). Fragment A is the catalytic portion responsible for enzymatic ADP-ribosylation of elongation factor 2, while fragment B is responsible for binding of toxin to cell receptors and entry of fragment A. The sequence is that of Diphtheria toxin from Corynebacterium diphtheriae.